A 55-amino-acid polypeptide reads, in one-letter code: Neurotoxin BmP08 (55 aa).

A signal peptide spans 1 to 23 (MKIFFAVLVILVLFSMLIWTAYG). 3 cysteine pairs are disulfide-bonded: cysteine 30-cysteine 45, cysteine 36-cysteine 50, and cysteine 39-cysteine 53.

In terms of tissue distribution, expressed by the venom gland.

The protein localises to the secreted. This chain is Neurotoxin BmP08, found in Olivierus martensii (Manchurian scorpion).